The sequence spans 162 residues: Caveolin-2 (162 aa).

The Cytoplasmic segment spans residues Met1–Lys86. Residue Tyr19 is modified to Phosphotyrosine; by SRC. A phosphoserine mark is found at Ser20 and Ser23. The residue at position 27 (Tyr27) is a Phosphotyrosine; by SRC. Position 36 is a phosphoserine (Ser36). Residues Phe87–Leu107 constitute an intramembrane region (helical). Topologically, residues Ser108–Asp162 are cytoplasmic.

It belongs to the caveolin family. Monomer or homodimer. Interacts with CAV1; the interaction forms a stable heterooligomeric complex that is required for targeting to lipid rafts and for caveolae formation. Tyrosine phosphorylated forms do not form heterooligomers with the Tyr-19-phosphorylated form existing as a monomer or dimer, and the Tyr-27-form as a monomer only. Interacts (tyrosine phosphorylated form) with the SH2 domain-containing proteins, RASA1, NCK1 and SRC. Interacts (tyrosine phosphorylated form) with INSR, the interaction (Tyr-27-phosphorylated form) is increased on insulin stimulation. Interacts (Tyr-19 phosphorylated form) with MAPK1 (phosphorylated form); the interaction, promoted by insulin, leads to nuclear location and MAPK1 activation. Interacts with STAT3; the interaction is increased on insulin-induced tyrosine phosphorylation leading to STAT activation. Phosphorylated on serine and tyrosine residues. CAV1 promotes phosphorylation on Ser-23 which then targets the complex to the plasma membrane, lipid rafts and caveolae. Phosphorylation on Ser-36 appears to modulate mitosis in endothelial cells. Phosphorylation on both Tyr-19 and Tyr-27 is required for insulin-induced 'Ser-727' phosphorylation of STAT3 and its activation. Phosphorylation on Tyr-19 is required for insulin-induced phosphorylation of MAPK1 and DNA binding of STAT3. Tyrosine phosphorylation is induced by both EGF and insulin (By. similarity).

It is found in the nucleus. Its subcellular location is the cytoplasm. It localises to the golgi apparatus membrane. The protein resides in the cell membrane. The protein localises to the membrane. It is found in the caveola. Functionally, may act as a scaffolding protein within caveolar membranes. Interacts directly with G-protein alpha subunits and can functionally regulate their activity. Acts as an accessory protein in conjunction with CAV1 in targeting to lipid rafts and driving caveolae formation. The Ser-36 phosphorylated form has a role in modulating mitosis in endothelial cells. Positive regulator of cellular mitogenesis of the MAPK signaling pathway. Required for the insulin-stimulated nuclear translocation and activation of MAPK1 and STAT3, and the subsequent regulation of cell cycle progression. This chain is Caveolin-2 (CAV2), found in Otolemur garnettii (Small-eared galago).